Here is a 405-residue protein sequence, read N- to C-terminus: Argininosuccinate synthase (405 aa).

An ATP-binding site is contributed by 12–20 (AYSGGLDTS). 2 residues coordinate L-citrulline: tyrosine 90 and serine 95. Residue glycine 120 participates in ATP binding. L-aspartate is bound by residues threonine 122, asparagine 126, and aspartate 127. Asparagine 126 is a binding site for L-citrulline. Residues arginine 130, serine 179, serine 188, glutamate 265, and tyrosine 277 each coordinate L-citrulline.

Belongs to the argininosuccinate synthase family. Type 1 subfamily. In terms of assembly, homotetramer.

Its subcellular location is the cytoplasm. The catalysed reaction is L-citrulline + L-aspartate + ATP = 2-(N(omega)-L-arginino)succinate + AMP + diphosphate + H(+). The protein operates within amino-acid biosynthesis; L-arginine biosynthesis; L-arginine from L-ornithine and carbamoyl phosphate: step 2/3. In Clostridium perfringens (strain 13 / Type A), this protein is Argininosuccinate synthase.